A 320-amino-acid chain; its full sequence is o-succinylbenzoate synthase (320 aa).

Catalysis depends on K133, which acts as the Proton donor. Mg(2+) contacts are provided by D161, E190, and D213. Residue K235 is the Proton acceptor of the active site.

The protein belongs to the mandelate racemase/muconate lactonizing enzyme family. MenC type 1 subfamily. A divalent metal cation serves as cofactor.

It catalyses the reaction (1R,6R)-6-hydroxy-2-succinyl-cyclohexa-2,4-diene-1-carboxylate = 2-succinylbenzoate + H2O. It functions in the pathway quinol/quinone metabolism; 1,4-dihydroxy-2-naphthoate biosynthesis; 1,4-dihydroxy-2-naphthoate from chorismate: step 4/7. Its pathway is quinol/quinone metabolism; menaquinone biosynthesis. In terms of biological role, converts 2-succinyl-6-hydroxy-2,4-cyclohexadiene-1-carboxylate (SHCHC) to 2-succinylbenzoate (OSB). This is o-succinylbenzoate synthase from Escherichia coli O6:K15:H31 (strain 536 / UPEC).